A 697-amino-acid polypeptide reads, in one-letter code: Phosphate acetyltransferase (697 aa).

The interval 366-697 (MFEHKLLEQA…QSPTEKASAQ (332 aa)) is phosphate acetyltransferase.

This sequence in the N-terminal section; belongs to the CobB/CobQ family. In the C-terminal section; belongs to the phosphate acetyltransferase and butyryltransferase family. As to quaternary structure, homohexamer.

The protein resides in the cytoplasm. It catalyses the reaction acetyl-CoA + phosphate = acetyl phosphate + CoA. Its pathway is metabolic intermediate biosynthesis; acetyl-CoA biosynthesis; acetyl-CoA from acetate: step 2/2. Involved in acetate metabolism. The polypeptide is Phosphate acetyltransferase (pta) (Streptomyces coelicolor (strain ATCC BAA-471 / A3(2) / M145)).